We begin with the raw amino-acid sequence, 579 residues long: CTP synthase 1 (579 aa).

Positions 305–559 (KIALVGKYTN…LGLVAASAGI (255 aa)) constitute a Glutamine amidotransferase type-1 domain. The For GATase activity role is filled by Cys404. Lys422 is covalently cross-linked (Glycyl lysine isopeptide (Lys-Gly) (interchain with G-Cter in ubiquitin)). Residues His535 and Glu537 each act as for GATase activity in the active site.

This sequence belongs to the CTP synthase family. In terms of assembly, homodimer. Oligomerizes to a tetramer in the presence of its substrates UTP and ATP.

The enzyme catalyses UTP + L-glutamine + ATP + H2O = CTP + L-glutamate + ADP + phosphate + 2 H(+). The protein operates within pyrimidine metabolism; CTP biosynthesis via de novo pathway; CTP from UDP: step 2/2. Activated by GTP and inhibited by CTP. Catalyzes the ATP-dependent amination of UTP to CTP with either L-glutamine or ammonia as the source of nitrogen. This is CTP synthase 1 (URA7) from Saccharomyces cerevisiae (strain ATCC 204508 / S288c) (Baker's yeast).